Reading from the N-terminus, the 335-residue chain is DNA-directed RNA polymerase subunit alpha (335 aa).

The alpha N-terminal domain (alpha-NTD) stretch occupies residues 1–233; sequence MTAVNDFLTP…QQIAVFVDLE (233 aa). Positions 247 to 335 are alpha C-terminal domain (alpha-CTD); the sequence is IDPILLRPVD…DDDRLNAKLR (89 aa).

Belongs to the RNA polymerase alpha chain family. As to quaternary structure, homodimer. The RNAP catalytic core consists of 2 alpha, 1 beta, 1 beta' and 1 omega subunit. When a sigma factor is associated with the core the holoenzyme is formed, which can initiate transcription.

The catalysed reaction is RNA(n) + a ribonucleoside 5'-triphosphate = RNA(n+1) + diphosphate. In terms of biological role, DNA-dependent RNA polymerase catalyzes the transcription of DNA into RNA using the four ribonucleoside triphosphates as substrates. The protein is DNA-directed RNA polymerase subunit alpha of Alcanivorax borkumensis (strain ATCC 700651 / DSM 11573 / NCIMB 13689 / SK2).